Consider the following 1036-residue polypeptide: Vacuolar basic amino acid transporter VSB1 (1036 aa).

Residues 1-213 are Vacuolar-facing; the sequence is MGRTIRRRRS…SKFAHYLPAA (213 aa). Residues serine 42 and serine 127 each carry the phosphoserine modification. The residue at position 130 (threonine 130) is a Phosphothreonine. 5 positions are modified to phosphoserine: serine 140, serine 144, serine 149, serine 152, and serine 153. Residues 214–234 traverse the membrane as a helical segment; the sequence is VLGLLLNILDALSYGMIIFPI. The Cytoplasmic segment spans residues 235–236; sequence TE. A helical transmembrane segment spans residues 237-257; the sequence is PVFSHLGPTGISMFYISTIIS. Residues 258–269 lie on the Vacuolar side of the membrane; sequence QAVYSGGWSSFP. The chain crosses the membrane as a helical span at residues 270–290; it reads SGIGSEMIEITPFYHTMALAI. The Cytoplasmic segment spans residues 291 to 300; that stretch reads KEALAGNDDE. A helical membrane pass occupies residues 301–321; it reads IITTTIFCYVISSMLTGVVFY. Over 322-338 the chain is Vacuolar; it reads ALGKLRLGKIVGFFPRH. Residues 339–359 form a helical membrane-spanning segment; the sequence is ILIGCIGGVGYFLIITGIEVT. Residues 360-375 are Cytoplasmic-facing; that stretch reads TRVAKFEYSWPFFSGL. Residues 376 to 396 form a helical membrane-spanning segment; it reads FTDYDTLAKWLLPVLLTVVLI. Topologically, residues 397–405 are vacuolar; sequence GTQRYFKNS. A helical transmembrane segment spans residues 406 to 426; that stretch reads LVLPSFYILTLVLFHFIVAII. The Cytoplasmic segment spans residues 427-473; that stretch reads PTLSLDALRQAGWIFPIANSDSKWYDHYRLFNVHKVHWSLVLQQIPT. A helical membrane pass occupies residues 474-494; it reads MMALTFFGILHVPINVPALAM. Residues 495–515 lie on the Vacuolar side of the membrane; the sequence is SLQMDKYDVDRELIAHGYSNF. Residues 516–536 traverse the membrane as a helical segment; that stretch reads FSGLLGSVQNYLVYTNSVLFI. The Cytoplasmic portion of the chain corresponds to 537-546; the sequence is RAGADSPFAG. Residues 547-567 form a helical membrane-spanning segment; sequence FLLIALTICIMIIGPVIISFI. Residue proline 568 is a topological domain, vacuolar. The chain crosses the membrane as a helical span at residues 569–589; sequence ICIVGSLIFLLGYELLVEALV. Residues 590–604 are Cytoplasmic-facing; that stretch reads DTWNKLNRFEYLTVV. The helical transmembrane segment at 605–625 threads the bilayer; sequence IIVFTMGIFDFVLGIIVGILI. The Vacuolar portion of the chain corresponds to 626 to 664; the sequence is ACFSFLVDSTKLQTINGEYNGNVARSTVYRDYVQTKFLD. Residues 660 to 781 enclose the STAS domain; the sequence is TKFLDGIGEQ…ADLNSALEWC (122 aa). Residues 665–685 traverse the membrane as a helical segment; the sequence is GIGEQIYVLKLQNLLFFGTII. At 686–1036 the chain is on the cytoplasmic side; the sequence is SIEEKIERLL…ELLGYTLVSA (351 aa). Phosphoserine is present on serine 842. At threonine 847 the chain carries Phosphothreonine.

Its subcellular location is the vacuole membrane. Its function is as follows. Amino acid transporter involved in vacuolar uptake of basic amino acids for storage during nitrogen replete condititions. May function as an amino acid/proton antiporter. This chain is Vacuolar basic amino acid transporter VSB1, found in Saccharomyces cerevisiae (strain ATCC 204508 / S288c) (Baker's yeast).